Reading from the N-terminus, the 180-residue chain is MADSEEWLEEWLTVGKIVGVQGLQGELRVNPASDFPERFTVPGPRWVRSKGSPPREMQLKTGRQLPGKSLFVVRLDSVDNRDAAEALVGSDWMVPADDRPQLGEGEFHLLDLVGLEARLSPDSDPIGTVTDLISGGNDLLEIKRTDGSKLLIPFVEAIVPEVHLKDGWLLLTPPPGLMDL.

Residues 104–177 (EGEFHLLDLV…WLLLTPPPGL (74 aa)) form the PRC barrel domain.

The protein belongs to the RimM family. In terms of assembly, binds ribosomal protein uS19.

The protein localises to the cytoplasm. An accessory protein needed during the final step in the assembly of 30S ribosomal subunit, possibly for assembly of the head region. Essential for efficient processing of 16S rRNA. May be needed both before and after RbfA during the maturation of 16S rRNA. It has affinity for free ribosomal 30S subunits but not for 70S ribosomes. The sequence is that of Ribosome maturation factor RimM from Synechococcus sp. (strain CC9902).